Consider the following 113-residue polypeptide: uncharacterized protein (113 aa).

It to H.influenzae HI_1053 and P.denitrificans COX locus Uncharacterized protein 4.

This is an uncharacterized protein from Cupriavidus necator (strain ATCC 17699 / DSM 428 / KCTC 22496 / NCIMB 10442 / H16 / Stanier 337) (Ralstonia eutropha).